We begin with the raw amino-acid sequence, 405 residues long: uncharacterized protein (405 aa).

Residues 1-20 form the signal peptide; that stretch reads MKAKLALSIIGLVLASLVAG. Cys-21 bears the N-acetylcysteine mark. A lipid anchor (S-archaeol cysteine) is attached at Cys-21.

This sequence belongs to the BMP lipoprotein family.

It localises to the cell membrane. This is an uncharacterized protein from Pyrococcus horikoshii (strain ATCC 700860 / DSM 12428 / JCM 9974 / NBRC 100139 / OT-3).